A 427-amino-acid polypeptide reads, in one-letter code: Glutamate-1-semialdehyde 2,1-aminomutase (427 aa).

The residue at position 265 (Lys-265) is an N6-(pyridoxal phosphate)lysine.

The protein belongs to the class-III pyridoxal-phosphate-dependent aminotransferase family. HemL subfamily. Homodimer. Requires pyridoxal 5'-phosphate as cofactor.

Its subcellular location is the cytoplasm. The enzyme catalyses (S)-4-amino-5-oxopentanoate = 5-aminolevulinate. It participates in porphyrin-containing compound metabolism; protoporphyrin-IX biosynthesis; 5-aminolevulinate from L-glutamyl-tRNA(Glu): step 2/2. This Pseudomonas putida (strain GB-1) protein is Glutamate-1-semialdehyde 2,1-aminomutase.